A 547-amino-acid polypeptide reads, in one-letter code: DNA ligase (547 aa).

Position 244 (Glu-244) interacts with ATP. The active-site N6-AMP-lysine intermediate is Lys-246. Residues Arg-251, Arg-266, Glu-295, Phe-334, Arg-405, and Lys-411 each coordinate ATP.

This sequence belongs to the ATP-dependent DNA ligase family. Mg(2+) is required as a cofactor.

The enzyme catalyses ATP + (deoxyribonucleotide)n-3'-hydroxyl + 5'-phospho-(deoxyribonucleotide)m = (deoxyribonucleotide)n+m + AMP + diphosphate.. DNA ligase that seals nicks in double-stranded DNA during DNA replication, DNA recombination and DNA repair. This chain is DNA ligase, found in Methanospirillum hungatei JF-1 (strain ATCC 27890 / DSM 864 / NBRC 100397 / JF-1).